The sequence spans 208 residues: MGISRDSWHKRYKTGATQPVPHKKRKFELGRPAANTKIGAHRVRLVRTRGGNEKYRALRLDSGNFSWASEQTTRKTRIVDTMYNATNNELVRTKTLVKGAIISVDAAPFRQWYEAHYALPLARKKNAKLSEEDNAILNKKRSHHTMKKYTERQKTAAVDALLIEQFNTGRLLARISSSPGQVGQANGYILEGKELDFYLRKIRAKKAK.

The protein belongs to the eukaryotic ribosomal protein eS8 family. Component of the small ribosomal subunit. Identified in a IGF2BP1-dependent mRNP granule complex containing untranslated mRNAs. Part of the small subunit (SSU) processome, composed of more than 70 proteins and the RNA chaperone small nucleolar RNA (snoRNA) U3.

The protein localises to the cytoplasm. The protein resides in the membrane. It is found in the nucleus. Its subcellular location is the nucleolus. In terms of biological role, component of the small ribosomal subunit. The ribosome is a large ribonucleoprotein complex responsible for the synthesis of proteins in the cell. Part of the small subunit (SSU) processome, first precursor of the small eukaryotic ribosomal subunit. During the assembly of the SSU processome in the nucleolus, many ribosome biogenesis factors, an RNA chaperone and ribosomal proteins associate with the nascent pre-rRNA and work in concert to generate RNA folding, modifications, rearrangements and cleavage as well as targeted degradation of pre-ribosomal RNA by the RNA exosome. In Caenorhabditis elegans, this protein is Small ribosomal subunit protein eS8 (rps-8).